We begin with the raw amino-acid sequence, 821 residues long: Fibroblast growth factor receptor 2 (821 aa).

Positions 1 to 21 (MVSWGRFICLVVVTMATLSLA) are cleaved as a signal peptide. The Extracellular segment spans residues 22 to 377 (RPSFSLVEDT…EITASPDYLE (356 aa)). In terms of domain architecture, Ig-like C2-type 1 spans 25–125 (FSLVEDTTLE…ETWYFMVNVT (101 aa)). Cysteines 62 and 107 form a disulfide. N-linked (GlcNAc...) asparagine glycans are attached at residues Asn83 and Asn123. The segment covering 131 to 144 (GDDEDDTDGAEDFV) has biased composition (acidic residues). A disordered region spans residues 131–151 (GDDEDDTDGAEDFVSENSNNK). 2 consecutive Ig-like C2-type domains span residues 154–247 (PYWT…YHLD) and 256–358 (PILQ…AWLT). Residues 161–178 (KMEKRLHAVPAANTVKFR) are heparin-binding. A disulfide bridge connects residues Cys179 and Cys231. Asn228, Asn241, Asn265, Asn297, Asn318, and Asn331 each carry an N-linked (GlcNAc...) asparagine glycan. Cysteines 278 and 342 form a disulfide. Residues 378-398 (IAIYCIGVFLIACMVVTVILC) form a helical membrane-spanning segment. Over 399–821 (RMKNTTKKPD…YPHINGSVKT (423 aa)) the chain is Cytoplasmic. Position 466 is a phosphotyrosine; by autocatalysis (Tyr466). In terms of domain architecture, Protein kinase spans 481–770 (LTLGKPLGEG…LTLTTNEEYL (290 aa)). ATP contacts are provided by residues 487–495 (LGEGCFGQV), Lys517, 565–567 (EYA), and Asn571. Tyr586 and Tyr588 each carry phosphotyrosine; by autocatalysis. Asp626 acts as the Proton acceptor in catalysis. Phosphotyrosine; by autocatalysis is present on residues Tyr656, Tyr657, and Tyr769. Ser780 is modified (phosphoserine).

It belongs to the protein kinase superfamily. Tyr protein kinase family. Fibroblast growth factor receptor subfamily. As to quaternary structure, monomer. Homodimer after ligand binding. Interacts predominantly with FGF1 and FGF2, but can also interact with FGF3, FGF4, FGF6, FGF7, FGF8, FGF9, FGF10, FGF17, FGF18 and FGF22 (in vitro). Ligand specificity is determined by tissue-specific expression of isoforms, and differences in the third Ig-like domain are crucial for ligand specificity. Isoform 1 has high affinity for FGF1 and FGF2, but low affinity for FGF7. Isoform 3 has high affinity for FGF1 and FGF7, and has much higher affinity for FGF7 than isoform 1 (in vitro). Affinity for fibroblast growth factors (FGFs) is increased by heparan sulfate glycosaminoglycans that function as coreceptors. Likewise, KLB increases the affinity for FGF19 and FGF21. Interacts with PLCG1, GRB2 and PAK4. Interacts with FLRT2. Autophosphorylated. Binding of FGF family members together with heparan sulfate proteoglycan or heparin promotes receptor dimerization and autophosphorylation on several tyrosine residues. Autophosphorylation occurs in trans between the two FGFR molecules present in the dimer. Phosphorylation at Tyr-769 is essential for interaction with PLCG1. In terms of processing, N-glycosylated in the endoplasmic reticulum. The N-glycan chains undergo further maturation to an Endo H-resistant form in the Golgi apparatus. Post-translationally, ubiquitinated. FGFR2 is rapidly ubiquitinated after autophosphorylation, leading to internalization and degradation. Subject to degradation both in lysosomes and by the proteasome.

The protein resides in the cell membrane. Its subcellular location is the golgi apparatus. It localises to the cytoplasmic vesicle. It is found in the secreted. The catalysed reaction is L-tyrosyl-[protein] + ATP = O-phospho-L-tyrosyl-[protein] + ADP + H(+). Present in an inactive conformation in the absence of bound ligand. Ligand binding leads to dimerization and activation by autophosphorylation on tyrosine residues. Inhibited by ARQ 523 and ARQ 069; these compounds maintain the kinase in an inactive conformation and inhibit autophosphorylation. Tyrosine-protein kinase that acts as a cell-surface receptor for fibroblast growth factors and plays an essential role in the regulation of cell proliferation, differentiation, migration and apoptosis, and in the regulation of embryonic development. Required for normal embryonic patterning, trophoblast function, limb bud development, lung morphogenesis, osteogenesis and skin development. Plays an essential role in the regulation of osteoblast differentiation, proliferation and apoptosis, and is required for normal skeleton development. Promotes cell proliferation in keratinocytes and immature osteoblasts, but promotes apoptosis in differentiated osteoblasts. Phosphorylates PLCG1, FRS2 and PAK4. Ligand binding leads to the activation of several signaling cascades. Activation of PLCG1 leads to the production of the cellular signaling molecules diacylglycerol and inositol 1,4,5-trisphosphate. Phosphorylation of FRS2 triggers recruitment of GRB2, GAB1, PIK3R1 and SOS1, and mediates activation of RAS, MAPK1/ERK2, MAPK3/ERK1 and the MAP kinase signaling pathway, as well as of the AKT1 signaling pathway. FGFR2 signaling is down-regulated by ubiquitination, internalization and degradation. Mutations that lead to constitutive kinase activation or impair normal FGFR2 maturation, internalization and degradation lead to aberrant signaling. Over-expressed FGFR2 promotes activation of STAT1. This Homo sapiens (Human) protein is Fibroblast growth factor receptor 2 (FGFR2).